The primary structure comprises 341 residues: Putative NADPH-dependent methylglyoxal reductase GRP2 (341 aa).

K40 and Y171 together coordinate NADP(+).

This sequence belongs to the NAD(P)-dependent epimerase/dehydratase family. Dihydroflavonol-4-reductase subfamily.

The protein resides in the cytoplasm. It carries out the reaction (S)-lactaldehyde + NADP(+) = methylglyoxal + NADPH + H(+). In terms of biological role, catalyzes the irreversible reduction of the cytotoxic compound methylglyoxal (MG, 2-oxopropanal) to (S)-lactaldehyde. MG is synthesized via a bypath of glycolysis from dihydroxyacetone phosphate and is believed to play a role in cell cycle regulation and stress adaptation. The protein is Putative NADPH-dependent methylglyoxal reductase GRP2 (GRP2) of Candida albicans (strain SC5314 / ATCC MYA-2876) (Yeast).